Here is a 468-residue protein sequence, read N- to C-terminus: MGKVKHLWSDVYDVEFSENELPNIGNILSLQDGKCFLMVERILSNTLVRAILIKIGEEQIKINDIAIDTKESFNVPVGSATNGAIFDVLGNLLNEHPGDFKKVEVDSTISTEKHFNSDNEIINTGIKIIDFFVPIIKGSKIGIFGGAGVGKTIIIKELIFNISRQRDSNDVKVFFVGTGERTREAKELYDELVNSSLIKSTSLFISQMNEPSGSRMKILPVGITAAEYARDSEQKDVLFFVDNIYRYLQAGRELSFSLGKKPSEAGYQATLVSDISSVQERLANSKHGSITSFQTVFLPMDDLNDPASVAILNHLDSSLVLSREIFAEGLFPAIDPLLSNSSLLQEKIVGKRHILLVKRVKKILHKYKQLEEMIMILGVQELEPNNRLIVKKAQQLKNYFSQNLFMASSYTKKPGFFADKEEMLDEIEKIVDGHYIDIPEYKFLYLGSSKKLDQIKANLEKDQKEQEN.

Residue 145–152 (GGAGVGKT) coordinates ATP.

Belongs to the ATPase alpha/beta chains family. F-type ATPases have 2 components, CF(1) - the catalytic core - and CF(0) - the membrane proton channel. CF(1) has five subunits: alpha(3), beta(3), gamma(1), delta(1), epsilon(1). CF(0) has three main subunits: a(1), b(2) and c(9-12). The alpha and beta chains form an alternating ring which encloses part of the gamma chain. CF(1) is attached to CF(0) by a central stalk formed by the gamma and epsilon chains, while a peripheral stalk is formed by the delta and b chains.

It is found in the cell membrane. The catalysed reaction is ATP + H2O + 4 H(+)(in) = ADP + phosphate + 5 H(+)(out). Produces ATP from ADP in the presence of a proton gradient across the membrane. The catalytic sites are hosted primarily by the beta subunits. The sequence is that of ATP synthase subunit beta 2 from Mycoplasmopsis pulmonis (strain UAB CTIP) (Mycoplasma pulmonis).